The sequence spans 623 residues: UvrABC system protein C (623 aa).

The region spanning 12–91 (PSPGVYLMKS…IKQHRPKYNI (80 aa)) is the GIY-YIG domain. One can recognise a UVR domain in the interval 201–236 (TEVARLYRSKMNLAAEQMRYEDAARYRDLLRAIEVT). Positions 603-623 (RLHGSPLPNPPPPGEGAMDRK) are disordered.

This sequence belongs to the UvrC family. In terms of assembly, interacts with UvrB in an incision complex.

It localises to the cytoplasm. The UvrABC repair system catalyzes the recognition and processing of DNA lesions. UvrC both incises the 5' and 3' sides of the lesion. The N-terminal half is responsible for the 3' incision and the C-terminal half is responsible for the 5' incision. The sequence is that of UvrABC system protein C from Citrifermentans bemidjiense (strain ATCC BAA-1014 / DSM 16622 / JCM 12645 / Bem) (Geobacter bemidjiensis).